The following is a 410-amino-acid chain: MQIKALSVSEINHYIKRIMINDPILSNVYIKGEISNYKLHSSGHIYFTLKDEKSRVSSVMFKTNTEQLKFLPEEGMQVLCRGYISLYERGGLYQFYVDHMEAAGVGALYLAYQQLKEKLEKQGYFDGKFKKEIPLIPRKIAVVTSPTGAAVRDIISVIKRRFPHVEIYLFPVLVQGDRAAPSIARAVELLNLFGGIDVAIIGRGGGSIEELWPFNEETVAEAIFSSQVPIISAVGHETDFTIADFVADLRAPTPSVAAERVVPDVKEVVERLNTLKDRLNKTLVKSIDAKRNQLGIIKSNYYFKNPLNMIYDRQQHLDILMKDLTRNINVKNSLYSNNVHRLGERLNSVSPLSVFSRGYALAENKKGERIKTISNVKLKESITVQLIDGQLSCEVTNILKEDKLVGKNQI.

Belongs to the XseA family. As to quaternary structure, heterooligomer composed of large and small subunits.

It is found in the cytoplasm. It catalyses the reaction Exonucleolytic cleavage in either 5'- to 3'- or 3'- to 5'-direction to yield nucleoside 5'-phosphates.. Its function is as follows. Bidirectionally degrades single-stranded DNA into large acid-insoluble oligonucleotides, which are then degraded further into small acid-soluble oligonucleotides. The protein is Exodeoxyribonuclease 7 large subunit of Alkaliphilus metalliredigens (strain QYMF).